Consider the following 376-residue polypeptide: Alanine racemase (376 aa).

Catalysis depends on K36, which acts as the Proton acceptor; specific for D-alanine. N6-(pyridoxal phosphate)lysine is present on K36. R134 is a substrate binding site. The active-site Proton acceptor; specific for L-alanine is the Y266. A substrate-binding site is contributed by M314.

The protein belongs to the alanine racemase family. Requires pyridoxal 5'-phosphate as cofactor.

It carries out the reaction L-alanine = D-alanine. The protein operates within amino-acid biosynthesis; D-alanine biosynthesis; D-alanine from L-alanine: step 1/1. Functionally, catalyzes the interconversion of L-alanine and D-alanine. May also act on other amino acids. In Nitratidesulfovibrio vulgaris (strain DP4) (Desulfovibrio vulgaris), this protein is Alanine racemase (alr).